The sequence spans 308 residues: Protein translocase subunit SecF (308 aa).

6 helical membrane-spanning segments follow: residues 28-48 (SIILSLISFIWIGIYKFNFGI), 140-160 (IEAGAMAMLFSFLAIMVYIWV), 164-184 (WYFGLGILIALVHDVILALGF), 194-214 (LSTIAAVLTIIGYSVNDSVVI), 246-266 (ILTVITTLLANLALILFGGEA), and 272-292 (VLVFFGIIAGTYSSIFISAPI).

It belongs to the SecD/SecF family. SecF subfamily. Forms a complex with SecD. Part of the essential Sec protein translocation apparatus which comprises SecA, SecYEG and auxiliary proteins SecDF-YajC and YidC.

The protein resides in the cell inner membrane. In terms of biological role, part of the Sec protein translocase complex. Interacts with the SecYEG preprotein conducting channel. SecDF uses the proton motive force (PMF) to complete protein translocation after the ATP-dependent function of SecA. The protein is Protein translocase subunit SecF of Rickettsia felis (strain ATCC VR-1525 / URRWXCal2) (Rickettsia azadi).